We begin with the raw amino-acid sequence, 325 residues long: Biotin synthase (325 aa).

Residues 52-281 (YQKDDVVLCS…AKPLLICGGR (230 aa)) form the Radical SAM core domain. [4Fe-4S] cluster is bound by residues Cys-70, Cys-74, and Cys-77. 3 residues coordinate [2Fe-2S] cluster: Ser-114, Cys-146, and Cys-206.

This sequence belongs to the radical SAM superfamily. Biotin synthase family. In terms of assembly, homodimer. The cofactor is [4Fe-4S] cluster. [2Fe-2S] cluster serves as cofactor.

It catalyses the reaction (4R,5S)-dethiobiotin + (sulfur carrier)-SH + 2 reduced [2Fe-2S]-[ferredoxin] + 2 S-adenosyl-L-methionine = (sulfur carrier)-H + biotin + 2 5'-deoxyadenosine + 2 L-methionine + 2 oxidized [2Fe-2S]-[ferredoxin]. Its pathway is cofactor biosynthesis; biotin biosynthesis; biotin from 7,8-diaminononanoate: step 2/2. Catalyzes the conversion of dethiobiotin (DTB) to biotin by the insertion of a sulfur atom into dethiobiotin via a radical-based mechanism. The protein is Biotin synthase of Syntrophus aciditrophicus (strain SB).